The following is a 214-amino-acid chain: Pyrrolidone-carboxylate peptidase (214 aa).

Active-site residues include E80, C143, and H166.

It belongs to the peptidase C15 family. As to quaternary structure, homotetramer.

The protein resides in the cytoplasm. It catalyses the reaction Release of an N-terminal pyroglutamyl group from a polypeptide, the second amino acid generally not being Pro.. Its function is as follows. Removes 5-oxoproline from various penultimate amino acid residues except L-proline. This Escherichia fergusonii (strain ATCC 35469 / DSM 13698 / CCUG 18766 / IAM 14443 / JCM 21226 / LMG 7866 / NBRC 102419 / NCTC 12128 / CDC 0568-73) protein is Pyrrolidone-carboxylate peptidase.